A 422-amino-acid chain; its full sequence is CRISPR-associated endodeoxyribonuclease Cas12f1 (422 aa).

Residues 1-126 form a recognition domain (REC) region; sequence MIKVYRYEIV…PSYKRDIPLD (126 aa). Residues 127–211 are wedge domain (WED); sequence LIKENISVNR…YLNISYDFEP (85 aa). The tract at residues 212–220 is linker; the sequence is QTRVLDLNK. The segment at 221–370 is ruvC-I; the sequence is IMGIDLGVAV…IKIDPQYTSQ (150 aa). Active-site residues include Asp225 and Glu324. The interval 371–399 is target nucleic acid-binding (TNB); sequence RCSECGNIDSGNRIGQAIFKCRACGYEAN. The Zn(2+) site is built by Cys372, Cys375, Cys391, and Cys394. Residues 400–420 are ruvC-II; that stretch reads ADYNAARNIAIPNIDKIIAES. Residue Asp401 is part of the active site.

The protein belongs to the CRISPR-associated endonuclease Cas12f family. In terms of assembly, an asymmetric homodimer. Guide RNA is probably required for dimerization. The cofactor is Mg(2+). It depends on Zn(2+) as a cofactor.

Its function is as follows. CRISPR (clustered regularly interspaced short palindromic repeat), is an adaptive immune system that provides protection against mobile genetic elements (viruses, transposable elements and conjugative plasmids). CRISPR clusters contain sequences complementary to antecedent mobile elements and target invading nucleic acids. CRISPR clusters are transcribed and processed into CRISPR RNA (crRNA), which requires a trans-encoded small RNA (tracrRNA), but not this protein. Recognizes a short motif in the CRISPR repeat sequences (the 5' PAM or protospacer adjacent motif, YTT in this organism) to help distinguish self versus nonself, as targets within the CRISPR locus do not have PAMs. Has dsDNA endonuclease activity upon expression in E.coli of this protein, a mini CRISPR array and the probable tracrRNA. Plasmid cleavage is centered around positions 19-24 base pairs 3' of PAM. The mini system protects E.coli against transformation by foreign plasmids. This Sulfoacidibacillus thermotolerans (Acidibacillus sulfuroxidans) protein is CRISPR-associated endodeoxyribonuclease Cas12f1.